The primary structure comprises 156 residues: Putative pre-16S rRNA nuclease (156 aa).

It belongs to the YqgF nuclease family.

Its subcellular location is the cytoplasm. In terms of biological role, could be a nuclease involved in processing of the 5'-end of pre-16S rRNA. This chain is Putative pre-16S rRNA nuclease, found in Ehrlichia ruminantium (strain Gardel).